A 51-amino-acid polypeptide reads, in one-letter code: Large ribosomal subunit protein eL39 (51 aa).

The protein belongs to the eukaryotic ribosomal protein eL39 family.

In Pyrococcus horikoshii (strain ATCC 700860 / DSM 12428 / JCM 9974 / NBRC 100139 / OT-3), this protein is Large ribosomal subunit protein eL39 (rpl39e).